A 510-amino-acid polypeptide reads, in one-letter code: Histidine ammonia-lyase (510 aa).

Residues 145-147 (ASG) constitute a cross-link (5-imidazolinone (Ala-Gly)). Ser146 carries the 2,3-didehydroalanine (Ser) modification.

This sequence belongs to the PAL/histidase family. Contains an active site 4-methylidene-imidazol-5-one (MIO), which is formed autocatalytically by cyclization and dehydration of residues Ala-Ser-Gly.

It localises to the cytoplasm. The enzyme catalyses L-histidine = trans-urocanate + NH4(+). Its pathway is amino-acid degradation; L-histidine degradation into L-glutamate; N-formimidoyl-L-glutamate from L-histidine: step 1/3. The polypeptide is Histidine ammonia-lyase (Stigmatella aurantiaca).